The primary structure comprises 556 residues: Endoglucanase 22 (556 aa).

The N-terminal stretch at 1 to 33 (MSRGRARLQPPPPGTRTTTLAAVLVLVLLAVVA) is a signal peptide. Asp-108 serves as the catalytic Nucleophile. Catalysis depends on residues His-450, Asp-502, and Glu-511.

This sequence belongs to the glycosyl hydrolase 9 (cellulase E) family.

Its subcellular location is the secreted. It catalyses the reaction Endohydrolysis of (1-&gt;4)-beta-D-glucosidic linkages in cellulose, lichenin and cereal beta-D-glucans.. This Oryza sativa subsp. japonica (Rice) protein is Endoglucanase 22 (GLU11).